The following is a 139-amino-acid chain: Putative truncated protein trichome birefringence-like 46 (139 aa).

Belongs to the PC-esterase family. TBL subfamily.

This is Putative truncated protein trichome birefringence-like 46 (TBL46) from Arabidopsis thaliana (Mouse-ear cress).